Consider the following 163-residue polypeptide: Type VII secretion system protein EsaG (163 aa).

Interacts with EssD (via C-terminus). Interacts with EssE.

It localises to the cytoplasm. In terms of biological role, component of the type VII secretion system (Ess). Also acts as part of toxin-antitoxin system. Counteracts the toxic effect of EssD via direct interaction. This is Type VII secretion system protein EsaG from Staphylococcus aureus (strain NCTC 8325 / PS 47).